Here is a 37-residue protein sequence, read N- to C-terminus: Cytochrome b6-f complex subunit 5 (37 aa).

Residues 5-25 (LLSGIVLGMITVSALGLFVAA) traverse the membrane as a helical segment.

Belongs to the PetG family. In terms of assembly, the 4 large subunits of the cytochrome b6-f complex are cytochrome b6, subunit IV (17 kDa polypeptide, PetD), cytochrome f and the Rieske protein, while the 4 small subunits are PetG, PetL, PetM and PetN. The complex functions as a dimer.

The protein resides in the plastid. The protein localises to the chloroplast thylakoid membrane. Component of the cytochrome b6-f complex, which mediates electron transfer between photosystem II (PSII) and photosystem I (PSI), cyclic electron flow around PSI, and state transitions. PetG is required for either the stability or assembly of the cytochrome b6-f complex. The chain is Cytochrome b6-f complex subunit 5 from Trieres chinensis (Marine centric diatom).